The primary structure comprises 747 residues: Rho GTPase-activating protein 24 (747 aa).

Disordered stretches follow at residues 1–20 (MEER…KNTK) and 327–475 (FPKD…GTHS). In terms of domain architecture, PH spans 17 to 123 (KNTKCGWLRK…WVKSIRRVIW (107 aa)). The 195-residue stretch at 133–327 (QKLEDTVRYE…VMISKHDRLF (195 aa)) folds into the Rho-GAP domain. Polar residues-rich tracts occupy residues 334-346 (QSKP…SNNN) and 355-367 (GQLQ…NTKE). Phosphoserine is present on residues S368, S390, S395, S397, S401, S412, S414, and S436. The span at 368 to 380 (SPVRRCSWDKPES) shows a compositional bias: basic and acidic residues. A compositionally biased stretch (polar residues) spans 381-404 (PQRSSVDNGSPTALSGSKTNSPRN). Residues 431–475 (IVTNGSFSSSNAEGVEKPQTTPNGSLQARRTSSLKSSGTKMGTHS) show a composition bias toward polar residues. T451 carries the post-translational modification Phosphothreonine. Residue S494 is modified to Phosphoserine. Residues 581–639 (DFYVGNFEDPVLDGPPQDDLSHPGDYENKSDRRSVGGRSSRATSSSDNSETFVGNTSSN) form a disordered region. Residues 599–614 (DLSHPGDYENKSDRRS) show a composition bias toward basic and acidic residues. The span at 616 to 629 (GGRSSRATSSSDNS) shows a compositional bias: low complexity. Over residues 630 to 639 (ETFVGNTSSN) the composition is skewed to polar residues. The stretch at 648–728 (SSLKQEMTKQ…KEMEQFFSTF (81 aa)) forms a coiled coil.

Interacts with FLNA. Phosphorylated by ROCK, leading to activate the RacGAP activity.

The protein localises to the cytoplasm. It is found in the cytoskeleton. The protein resides in the cell junction. Its subcellular location is the adherens junction. It localises to the focal adhesion. The protein localises to the cell projection. Rho GTPase-activating protein involved in cell polarity, cell morphology and cytoskeletal organization. Acts as a GTPase activator for the Rac-type GTPase by converting it to an inactive GDP-bound state. Controls actin remodeling by inactivating Rac downstream of Rho leading to suppress leading edge protrusion and promotes cell retraction to achieve cellular polarity. Able to suppress RAC1 and CDC42 activity in vitro. Overexpression induces cell rounding with partial or complete disruption of actin stress fibers and formation of membrane ruffles, lamellipodia, and filopodia. Isoform 2 is a vascular cell-specific GAP involved in modulation of angiogenesis. The protein is Rho GTPase-activating protein 24 (Arhgap24) of Mus musculus (Mouse).